The chain runs to 60 residues: Large ribosomal subunit protein bL32 (60 aa).

The tract at residues 1 to 60 is disordered; sequence MAVQQNKKSPSKRGMHRSHNALTVPGIAVEPTTGETHMRHHISPNGFYRGRQVLKNKSEA. Residues 9 to 19 are compositionally biased toward basic residues; sequence SPSKRGMHRSH.

Belongs to the bacterial ribosomal protein bL32 family.

The polypeptide is Large ribosomal subunit protein bL32 (Acidovorax ebreus (strain TPSY) (Diaphorobacter sp. (strain TPSY))).